A 213-amino-acid chain; its full sequence is MNKTLIINAHPKVDDTSSVSIKVFNHFLESYKEFIPNNETIEQINLYDDVVPMIDKTVLSAWEKQGNGQQLTDEEQKVTERMSEILQQFKSANTYVIVLPLHNFNIPSKLKDYMDNIMIARETFKYTETGSVGLLKDGRRMLVIQASGGIYTNDDWYTDVEYSHKYLKAMFNFLGIEDYQIVRAQGTAVLDPNEVLQNAYREVEEAASRLANK.

S18 to S20 provides a ligand contact to FMN.

It belongs to the azoreductase type 1 family. Homodimer. FMN is required as a cofactor.

The enzyme catalyses 2 a quinone + NADH + H(+) = 2 a 1,4-benzosemiquinone + NAD(+). It catalyses the reaction N,N-dimethyl-1,4-phenylenediamine + anthranilate + 2 NAD(+) = 2-(4-dimethylaminophenyl)diazenylbenzoate + 2 NADH + 2 H(+). Its function is as follows. Quinone reductase that provides resistance to thiol-specific stress caused by electrophilic quinones. In terms of biological role, also exhibits azoreductase activity. Catalyzes the reductive cleavage of the azo bond in aromatic azo compounds to the corresponding amines. In Bacillus cereus (strain ZK / E33L), this protein is FMN-dependent NADH:quinone oxidoreductase 1.